The chain runs to 197 residues: Recombination protein RecR (197 aa).

The C4-type zinc-finger motif lies at 56 to 71 (CKRCGSYAETEICNIC). A Toprim domain is found at 79 to 174 (HTFCVVEQPE…DVTRIAYGIT (96 aa)).

The protein belongs to the RecR family.

May play a role in DNA repair. It seems to be involved in an RecBC-independent recombinational process of DNA repair. It may act with RecF and RecO. The sequence is that of Recombination protein RecR from Leptospira borgpetersenii serovar Hardjo-bovis (strain JB197).